Consider the following 621-residue polypeptide: MIQVLLVTICLAVFPYQGSSIILESGNVNDYEVVYPRKVTSLPKGAVQQKYEDAMQYELKVNGEPVVLHLEKNKGLFSKDYSETHYSPDGRKITTKPPVKDHCYYHGHIQNDADSTASISACNGLKGHFKLQGEMYLIEPLKLPDSEAHAVFKYENVEKEDEAPKMCGVTETNWESDEPIKEASQSNLTPEQQSYLNAPKYVKFFLVADHIMYLKYGRNLTTLRTRIFDTVNVVYLILLRINIHVLLVGMEIWSHKDKIIVQSVPAVTLKLFATWREADLLKHKSHGCAHLLTGINFNGPTAGLAYLGAICNPMYSAGIVQDHNKIHHLVAIAMAHELGHNLGINHDKDTCTCRAKACVMAGTISCDASYLFSDCSRQEHREFLIKNMPQCILKKPLKTDVVSPPVCGNYFVEVGEDCDCGSPATCRDSCCNPTNCKLRQGAQCAEGLCCDQCRFKGAGTECRPASSECDMADLCTGRSAECTDRFQRNGQPCQNNNGYCYNGTCPSMTDQCIALFGPNAAVSQDACFQFNREGNHYGYCRKEQNTKIACEPENVKCGRLYCIDSSPANKNPCNIVYLPNDEEKGMVLAGTKCADGRACNSNGQCVGVNGAYKSTTGFSQI.

The first 20 residues, 1–20 (MIQVLLVTICLAVFPYQGSS), serve as a signal peptide directing secretion. The propeptide occupies 21–191 (IILESGNVND…EASQSNLTPE (171 aa)). Position 192 is a pyrrolidone carboxylic acid (Q192). One can recognise a Peptidase M12B domain in the interval 200 to 396 (KYVKFFLVAD…NMPQCILKKP (197 aa)). The N-linked (GlcNAc...) asparagine glycan is linked to N219. Intrachain disulfides connect C311/C391, C351/C375, and C353/C358. H336 contributes to the Zn(2+) binding site. E337 is a catalytic residue. Positions 340 and 346 each coordinate Zn(2+). A Disintegrin domain is found at 404–489 (PPVCGNYFVE…AECTDRFQRN (86 aa)). Positions 406, 409, 411, 413, 416, and 419 each coordinate Ca(2+). Cystine bridges form between C407–C436, C418–C431, C420–C426, C430–C453, C444–C450, C449–C475, C462–C482, C469–C500, C493–C505, C512–C562, C527–C573, C540–C550, C557–C599, and C593–C605. Residues 468–470 (ECD) carry the D/ECD-tripeptide motif. D470, M471, D473, D484, and R485 together coordinate Ca(2+). N-linked (GlcNAc...) asparagine glycosylation occurs at N502.

Belongs to the venom metalloproteinase (M12B) family. P-III subfamily. P-IIIc sub-subfamily. In terms of assembly, homodimer; disulfide-linked. It depends on Zn(2+) as a cofactor. Post-translationally, the N-terminus is blocked. In terms of tissue distribution, expressed by the venom gland.

It localises to the secreted. Inhibited by EDTA and DTT, and partially inhibited by EGTA, but not inhibited by PMSF and NEM. In terms of biological role, snake venom zinc metalloprotease that hydrolyzes the alpha-chain (FGA) and more slowly the beta-chain (FGB) of fibrinogen. Inhibits cell proliferation and induces cell morphologic changes transiently on human umbilical vein endothelial cells. In Trimeresurus stejnegeri (Chinese green tree viper), this protein is Zinc metalloproteinase-disintegrin-like TSV-DM.